A 214-amino-acid polypeptide reads, in one-letter code: Calcineurin B homologous protein 3 (214 aa).

A lipid anchor (N-myristoyl glycine) is attached at Gly-2. An EF-hand domain is found at 110 to 145 (CRTDKLRFLFNMYDSDNDNKITLEEYRKVVEELLSG). Residues Asp-123, Asp-125, Asp-127, Lys-129, and Glu-134 each contribute to the Ca(2+) site.

Belongs to the calcineurin regulatory subunit family. CHP subfamily. Monomer. Homodimer.

Its subcellular location is the nucleus. The protein localises to the cytoplasm. It localises to the membrane. The protein resides in the cell membrane. It is found in the cell projection. Its subcellular location is the lamellipodium. The protein localises to the ruffle membrane. Functionally, functions as an integral cofactor in cell pH regulation by controlling plasma membrane-type Na(+)/H(+) exchange activity. Promotes the induction of hematopoietic stem cell differentiation toward megakaryocytic lineage. Essential for the coupling of ERK cascade activation with the expression of ETS family genes in megakaryocytic differentiation. Also involved in granulocytic differentiation in a ERK-dependent manner. Inhibits the phosphatase activity of calcineurin. The chain is Calcineurin B homologous protein 3 from Xenopus laevis (African clawed frog).